A 60-amino-acid chain; its full sequence is Large ribosomal subunit protein uL30 (60 aa).

It belongs to the universal ribosomal protein uL30 family. As to quaternary structure, part of the 50S ribosomal subunit.

In Lactiplantibacillus plantarum (strain ATCC BAA-793 / NCIMB 8826 / WCFS1) (Lactobacillus plantarum), this protein is Large ribosomal subunit protein uL30.